Consider the following 154-residue polypeptide: Urease accessory protein UreE (154 aa).

Residues 135–154 (YGHGRTFGHDHGHAHDHHHA) are disordered.

Belongs to the UreE family.

It is found in the cytoplasm. Involved in urease metallocenter assembly. Binds nickel. Probably functions as a nickel donor during metallocenter assembly. The sequence is that of Urease accessory protein UreE from Paracoccus denitrificans (strain Pd 1222).